The sequence spans 301 residues: MAARLRDYWDLTKPKVVALIVFTALVGMFLAIPGMPSVVQIQSGALGFLGIWLAAAAAAAINQLLDAKIDAQMARTSWRPLVVGKVRPVQVLVFAGVLITLSMTILTLWVNLITAVLTFTSLIGYAVIYTVYLKRMTSQNIVIGGLAGAMPPMLGWAAVTGLSTAADWINASLLVAIIFVWTPPHFWALAIFRRADYAKASIPMLPVTHGVQHTSRQILLYTVILSVVTLLPVATGMSGVFYLGAALVLDAVFLWYAWRLLDPPDELFAMKTFGYSIVYLMALFAFLMFDHWLRLADFYWN.

The next 9 membrane-spanning stretches (helical) occupy residues 16-36 (VVALIVFTALVGMFLAIPGMP), 41-61 (IQSGALGFLGIWLAAAAAAAI), 93-113 (VFAGVLITLSMTILTLWVNLI), 114-134 (TAVLTFTSLIGYAVIYTVYLK), 141-161 (IVIGGLAGAMPPMLGWAAVTG), 172-192 (SLLVAIIFVWTPPHFWALAIF), 217-237 (QILLYTVILSVVTLLPVATGM), 238-258 (SGVFYLGAALVLDAVFLWYAW), and 273-293 (FGYSIVYLMALFAFLMFDHWL).

The protein belongs to the UbiA prenyltransferase family. Protoheme IX farnesyltransferase subfamily.

Its subcellular location is the cell inner membrane. It catalyses the reaction heme b + (2E,6E)-farnesyl diphosphate + H2O = Fe(II)-heme o + diphosphate. It functions in the pathway porphyrin-containing compound metabolism; heme O biosynthesis; heme O from protoheme: step 1/1. In terms of biological role, converts heme B (protoheme IX) to heme O by substitution of the vinyl group on carbon 2 of heme B porphyrin ring with a hydroxyethyl farnesyl side group. The sequence is that of Protoheme IX farnesyltransferase from Xylella fastidiosa (strain Temecula1 / ATCC 700964).